A 630-amino-acid polypeptide reads, in one-letter code: 1-deoxy-D-xylulose-5-phosphate synthase (630 aa).

Residues H80 and 121–123 contribute to the thiamine diphosphate site; that span reads GHS. Position 152 (D152) interacts with Mg(2+). Thiamine diphosphate contacts are provided by residues 153–154, N181, Y288, and E370; that span reads GA. N181 contributes to the Mg(2+) binding site.

Belongs to the transketolase family. DXPS subfamily. In terms of assembly, homodimer. Mg(2+) serves as cofactor. Requires thiamine diphosphate as cofactor.

It catalyses the reaction D-glyceraldehyde 3-phosphate + pyruvate + H(+) = 1-deoxy-D-xylulose 5-phosphate + CO2. Its pathway is metabolic intermediate biosynthesis; 1-deoxy-D-xylulose 5-phosphate biosynthesis; 1-deoxy-D-xylulose 5-phosphate from D-glyceraldehyde 3-phosphate and pyruvate: step 1/1. Functionally, catalyzes the acyloin condensation reaction between C atoms 2 and 3 of pyruvate and glyceraldehyde 3-phosphate to yield 1-deoxy-D-xylulose-5-phosphate (DXP). This chain is 1-deoxy-D-xylulose-5-phosphate synthase, found in Colwellia psychrerythraea (strain 34H / ATCC BAA-681) (Vibrio psychroerythus).